Here is a 527-residue protein sequence, read N- to C-terminus: Protein SDS24 (527 aa).

Low complexity-rich tracts occupy residues 1–22 (MAST…LPTS) and 55–74 (TPPT…TPAP). The segment at 1–75 (MASTSNTFPP…PGCAATPAPL (75 aa)) is disordered. Phosphoserine is present on Ser94. CBS domains lie at 114–175 (IEQN…KITV), 198–256 (LTPK…NARS), 283–342 (TSRQ…QYPL), and 443–512 (LNSH…GNKE). A compositionally biased stretch (low complexity) spans 424-447 (AQSSANGATPMSKSSSSTSLNSHS). Disordered regions lie at residues 424–478 (AQSS…TNTP) and 508–527 (TGNK…SIAM). Residues Ser458 and Ser524 each carry the phosphoserine modification.

This sequence belongs to the SDS23 family.

The protein localises to the cytoplasm. It localises to the nucleus. In terms of biological role, involved in DNA replication and cell separation during budding. This chain is Protein SDS24 (SDS24), found in Saccharomyces cerevisiae (strain YJM789) (Baker's yeast).